Consider the following 578-residue polypeptide: V-type ATP synthase alpha chain (578 aa).

Gly-228–Thr-235 lines the ATP pocket.

Belongs to the ATPase alpha/beta chains family.

It carries out the reaction ATP + H2O + 4 H(+)(in) = ADP + phosphate + 5 H(+)(out). Functionally, produces ATP from ADP in the presence of a proton gradient across the membrane. The V-type alpha chain is a catalytic subunit. In Thermus thermophilus (strain ATCC BAA-163 / DSM 7039 / HB27), this protein is V-type ATP synthase alpha chain.